The primary structure comprises 306 residues: uncharacterized protein (306 aa).

The Proton donor role is filled by Tyr-51. Residue Gly-197–Lys-207 participates in NADP(+) binding.

This sequence belongs to the aldo/keto reductase family. Aldo/keto reductase 2 subfamily.

This is an uncharacterized protein from Bacillus subtilis (strain 168).